The primary structure comprises 445 residues: Phosphoglucosamine mutase (445 aa).

Ser99 (phosphoserine intermediate) is an active-site residue. The Mg(2+) site is built by Ser99, Asp242, Asp244, and Asp246. Position 99 is a phosphoserine (Ser99).

The protein belongs to the phosphohexose mutase family. Mg(2+) serves as cofactor. Activated by phosphorylation.

It carries out the reaction alpha-D-glucosamine 1-phosphate = D-glucosamine 6-phosphate. Functionally, catalyzes the conversion of glucosamine-6-phosphate to glucosamine-1-phosphate. In Helicobacter pylori (strain Shi470), this protein is Phosphoglucosamine mutase.